Here is a 172-residue protein sequence, read N- to C-terminus: ATP synthase subunit b (172 aa).

A helical membrane pass occupies residues L27 to E47.

Belongs to the ATPase B chain family. As to quaternary structure, F-type ATPases have 2 components, F(1) - the catalytic core - and F(0) - the membrane proton channel. F(1) has five subunits: alpha(3), beta(3), gamma(1), delta(1), epsilon(1). F(0) has four main subunits: a(1), b(1), b'(1) and c(10-14). The alpha and beta chains form an alternating ring which encloses part of the gamma chain. F(1) is attached to F(0) by a central stalk formed by the gamma and epsilon chains, while a peripheral stalk is formed by the delta, b and b' chains.

It localises to the cellular thylakoid membrane. In terms of biological role, f(1)F(0) ATP synthase produces ATP from ADP in the presence of a proton or sodium gradient. F-type ATPases consist of two structural domains, F(1) containing the extramembraneous catalytic core and F(0) containing the membrane proton channel, linked together by a central stalk and a peripheral stalk. During catalysis, ATP synthesis in the catalytic domain of F(1) is coupled via a rotary mechanism of the central stalk subunits to proton translocation. Its function is as follows. Component of the F(0) channel, it forms part of the peripheral stalk, linking F(1) to F(0). The protein is ATP synthase subunit b of Prochlorococcus marinus (strain MIT 9313).